Here is a 305-residue protein sequence, read N- to C-terminus: Ribosomal RNA small subunit methyltransferase H (305 aa).

Residues 30 to 32 (GGH), Asp-49, Phe-74, Asp-96, and Gln-103 contribute to the S-adenosyl-L-methionine site.

The protein belongs to the methyltransferase superfamily. RsmH family.

The protein resides in the cytoplasm. The enzyme catalyses cytidine(1402) in 16S rRNA + S-adenosyl-L-methionine = N(4)-methylcytidine(1402) in 16S rRNA + S-adenosyl-L-homocysteine + H(+). In terms of biological role, specifically methylates the N4 position of cytidine in position 1402 (C1402) of 16S rRNA. This Francisella tularensis subsp. holarctica (strain LVS) protein is Ribosomal RNA small subunit methyltransferase H.